The following is a 456-amino-acid chain: Chromosomal replication initiator protein DnaA (456 aa).

Residues 1–83 (MTASLWQQCL…LRFDIGNRPH (83 aa)) form a domain I, interacts with DnaA modulators region. A domain II region spans residues 83–119 (HPVAVARAPARGADPVNNSQKSWESKAEAKPEPNHKS). The segment at 92-122 (ARGADPVNNSQKSWESKAEAKPEPNHKSNTN) is disordered. Over residues 105–117 (WESKAEAKPEPNH) the composition is skewed to basic and acidic residues. The tract at residues 120-336 (NTNVNYTFEN…GALNRVIANA (217 aa)) is domain III, AAA+ region. ATP-binding residues include G164, G166, K167, and T168. The segment at 337–456 (NFTGRAINID…YSNLIRTLSS (120 aa)) is domain IV, binds dsDNA.

Belongs to the DnaA family. Oligomerizes as a right-handed, spiral filament on DNA at oriC.

It localises to the cytoplasm. Plays an essential role in the initiation and regulation of chromosomal replication. ATP-DnaA binds to the origin of replication (oriC) to initiate formation of the DNA replication initiation complex once per cell cycle. Binds the DnaA box (a 9 base pair repeat at the origin) and separates the double-stranded (ds)DNA. Forms a right-handed helical filament on oriC DNA; dsDNA binds to the exterior of the filament while single-stranded (ss)DNA is stabiized in the filament's interior. The ATP-DnaA-oriC complex binds and stabilizes one strand of the AT-rich DNA unwinding element (DUE), permitting loading of DNA polymerase. After initiation quickly degrades to an ADP-DnaA complex that is not apt for DNA replication. Binds acidic phospholipids. The sequence is that of Chromosomal replication initiator protein DnaA from Aeromonas hydrophila subsp. hydrophila (strain ATCC 7966 / DSM 30187 / BCRC 13018 / CCUG 14551 / JCM 1027 / KCTC 2358 / NCIMB 9240 / NCTC 8049).